The sequence spans 664 residues: E3 ubiquitin-protein ligase RNF139 (664 aa).

A2 is subject to N-acetylalanine. A run of 12 helical transmembrane segments spans residues 51-71 (IVLQ…VLIL), 85-105 (AFLL…HIDF), 125-145 (SLWM…VTLL), 154-174 (LIIL…PLHI), 178-198 (LLFT…AVKL), 293-313 (GMSA…LAFI), 323-343 (LGFV…LSGL), 356-376 (MCLL…PVLM), 390-410 (FPVL…SYVL), 420-440 (LFAV…SLTV), 469-489 (SIIE…TMMF), and 495-512 (IRAF…YLQA). The RING-type; atypical zinc finger occupies 547 to 586 (CAICYHEFTTSARITPCNHYFHALCLRKWLYIQDTCPMCH). The disordered stretch occupies residues 601-664 (VSNNNGFIPP…AAEEFNDDTD (64 aa)). Over residues 616–628 (EAVREAAAESDRE) the composition is skewed to basic and acidic residues. Residues 629–639 (LNEDDSTDCDD) are compositionally biased toward acidic residues. At S634 the chain carries Phosphoserine. Phosphothreonine occurs at positions 635 and 663.

As to quaternary structure, interacts with MHC class I and HM13. Interacts with VHL. Component of SCAP-SREBP complex composed of SREBF2, SCAP and RNF139; the complex hampers the interaction between SCAP and SEC24B, thereby reducing SREBF2 proteolytic processing. Interacts with SREBF2 (via C-terminal domain). Interacts with SCAP; the interaction inhibits the interaction of SCAP with SEC24B and hampering the ER to Golgi transport of the SCAP-SREBP complex. Interacts with SEC24B. Interacts with INSIG1 and INSIG2. Interacts with EIF3F and EIF3H; the interaction leads to protein translation inhibitions in a ubiquitination-dependent manner. Interacts with XBP1 isoform 1; the interaction induces ubiquitination and degradation of XBP1 isoform 1. Interacts with AUP1, AMFR and UBE2G2; interaction with AUP1 facilitates interaction of RNF139 with ubiquitin-conjugating enzyme UBE2G2 and ubiquitin ligase AMFR/gp78, leading to sterol-induced ubiquitination of HMGCR and its subsequent proteasomal degradation. Post-translationally, autoubiquitinated. Ubiquitination is induced by sterol and leads to ist degradation via the ubiquitin-proteasome pathway. In terms of tissue distribution, highly expressed in testis, placenta and adrenal gland. Moderate expression in heart, brain, liver, skeletal muscle and pancreas, and low expression in lung and kidney.

It is found in the endoplasmic reticulum membrane. It catalyses the reaction S-ubiquitinyl-[E2 ubiquitin-conjugating enzyme]-L-cysteine + [acceptor protein]-L-lysine = [E2 ubiquitin-conjugating enzyme]-L-cysteine + N(6)-ubiquitinyl-[acceptor protein]-L-lysine.. It participates in protein modification; protein ubiquitination. Functionally, E3-ubiquitin ligase; acts as a negative regulator of cell proliferation through mechanisms involving G2/M arrest and cell death. Required for MHC class I ubiquitination in cells expressing the cytomegalovirus protein US2 before dislocation from the endoplasmic reticulum (ER). Affects SREBP processing by hindering the SREBP-SCAP complex translocation from the ER to the Golgi, thereby reducing SREBF2 target gene expression. Involved in the sterol-accelerated degradation of HMGCR. This is achieved through binding of RNF139 to INSIG1 and/or INSIG2 at the ER membrane. In addition, interaction of RNF139 with AUP1 facilitates interaction of RNF139 with ubiquitin-conjugating enzyme UBE2G2 and ubiquitin ligase AMFR, leading to ubiquitination of HMGCR. The ubiquitinated HMGCR is then released from the ER into the cytosol for subsequent destruction. Required for INSIG1 ubiquitination. May be required for EIF3 complex ubiquitination. This chain is E3 ubiquitin-protein ligase RNF139, found in Homo sapiens (Human).